The primary structure comprises 142 residues: Galactose-6-phosphate isomerase subunit LacA 2 (142 aa).

It belongs to the LacAB/RpiB family. In terms of assembly, heteromultimeric protein consisting of LacA and LacB.

It carries out the reaction aldehydo-D-galactose 6-phosphate = keto-D-tagatose 6-phosphate. It participates in carbohydrate metabolism; D-galactose 6-phosphate degradation; D-tagatose 6-phosphate from D-galactose 6-phosphate: step 1/1. The polypeptide is Galactose-6-phosphate isomerase subunit LacA 2 (Streptococcus pyogenes serotype M1).